The chain runs to 237 residues: C-type lectin domain family 4 member A (237 aa).

The Cytoplasmic segment spans residues 1-48; the sequence is MTSEITYAEVRFKNEFKSSGINTASSAASKERTAPHKSNTGFPKLLCA. The ITIM motif signature appears at 5 to 10; it reads ITYAEV. A helical; Signal-anchor for type II membrane protein membrane pass occupies residues 49-69; it reads SLLIFFLLLAISFFIAFVIFF. Over 70 to 237 the chain is Extracellular; the sequence is QKYSQLLEKK…SVCEMMKIHL (168 aa). Cystine bridges form between Cys-106–Cys-117, Cys-134–Cys-230, and Cys-203–Cys-222. The C-type lectin domain occupies 113-231; it reads FSSNCYFIST…CLGPQRSVCE (119 aa). The Ca(2+) site is built by Val-143, Asn-145, and Glu-149. Asn-185 is a glycosylation site (N-linked (GlcNAc...) asparagine). Ca(2+) is bound by residues Glu-195, Ser-197, and Glu-201. Alpha-D-mannopyranose contacts are provided by residues 195–197 and Glu-201; that span reads EPS. An N-acetyl-D-glucosamine-binding site is contributed by 207-209; the sequence is NFR. Residues Asn-218, Asp-219, and Glu-231 each coordinate Ca(2+).

As to quaternary structure, may interact with PTPN6 via its ITIM motif. Expressed preferentially in hematopoietic tissues. Expressed in all circulating Ag-presenting cells such as dendritic cells, myeloid cells, monocytes, macrophages, B-cells and epidermal Langerhans cells (at protein level). Expressed in peripheral blood leukocytes, neutrophils, moderate quantities in spleen, lymph node, and bone marrow, and at very low levels in thymus.

Its subcellular location is the cell membrane. C-type lectin receptor that binds carbohydrates mannose and fucose but also weakly interacts with N-acetylglucosamine (GlcNAc) in a Ca(2+)-dependent manner. Involved in regulating immune reactivity. Once triggered by antigen, it is internalized by clathrin-dependent endocytosis and delivers its antigenic cargo into the antigen presentation pathway resulting in cross-priming of CD8(+) T cells. This cross-presentation and cross-priming are enhanced by TLR7 and TLR8 agonists with increased expansion of the CD8(+) T cells, high production of IFNG and TNF with reduced levels of IL4, IL5 and IL13. In plasmacytoid dendritic cells, inhibits TLR9-mediated IFNA and TNF production. May be involved via its ITIM motif (immunoreceptor tyrosine-based inhibitory motifs) in the inhibition of B-cell-receptor-mediated calcium mobilization and protein tyrosine phosphorylation. Functionally, (Microbial infection) Involved in the interaction between HIV-1 virus and dendritic cells. Enhances HIV-1 binding/entry and virus infection. Requires ITIM motif-associated signal transduction pathway involving phosphatases PTPN6 and PTPN11, SYK, Src kinases and MAP kinases. This is C-type lectin domain family 4 member A from Homo sapiens (Human).